The sequence spans 397 residues: Acetate kinase 2 (397 aa).

Asparagine 10 contributes to the Mg(2+) binding site. Residue lysine 17 participates in ATP binding. Position 90 (arginine 90) interacts with substrate. Aspartate 147 functions as the Proton donor/acceptor in the catalytic mechanism. Residues 207 to 211, 281 to 283, and 329 to 333 each bind ATP; these read HLGNG, DAR, and GIGEN. Residue glutamate 385 participates in Mg(2+) binding.

Belongs to the acetokinase family. In terms of assembly, homodimer. The cofactor is Mg(2+). It depends on Mn(2+) as a cofactor.

The protein localises to the cytoplasm. The enzyme catalyses acetate + ATP = acetyl phosphate + ADP. Its pathway is metabolic intermediate biosynthesis; acetyl-CoA biosynthesis; acetyl-CoA from acetate: step 1/2. In terms of biological role, catalyzes the formation of acetyl phosphate from acetate and ATP. Can also catalyze the reverse reaction. This Vibrio parahaemolyticus serotype O3:K6 (strain RIMD 2210633) protein is Acetate kinase 2.